A 941-amino-acid polypeptide reads, in one-letter code: Pre-mRNA-processing factor 6 (941 aa).

Positions 1–79 are disordered; sequence MNKKKKPFLG…DEDLNDTNYD (79 aa). Basic and acidic residues predominate over residues 39–65; sequence DANDPVDDRHAPPGKRTVGDQMKKNQA. Residues 66 to 78 show a composition bias toward acidic residues; it reads ADDDDEDLNDTNY. Ser-143 bears the Phosphoserine mark. A phosphothreonine mark is found at Thr-180, Thr-266, and Thr-275. Phosphoserine is present on Ser-279. HAT repeat units lie at residues 384-416, 418-444, 445-476, 554-586, 588-620, 622-654, 689-721, 723-755, and 855-887; these read TDIR…LEEP, DARI…ARLE, TYEN…LEEA, NALE…FGKN, GTRE…SKWL, GDVP…LESE, DNIR…IEEQ, EMME…LEEK, and RKIT…FELQ.

As to quaternary structure, identified in the spliceosome B complex. Identified in the spliceosome C complex. Associates with the U5 snRNP particle. Component of the U4/U6-U5 tri-snRNP complex composed of the U4, U6 and U5 snRNAs and at least PRPF3, PRPF4, PRPF6, PRPF8, PRPF31, SNRNP200, TXNL4A, SNRNP40, DDX23, CD2BP2, PPIH, SNU13, EFTUD2, SART1 and USP39, LSm proteins LSm2-8 and Sm proteins. Interacts with ARAF1. Interacts with AR and NR3C1, but not ESR1, independently of the presence of hormones. Interacts with USH1G. Phosphorylated by PRP4K during spliceosome assembly.

The protein localises to the nucleus. It is found in the nucleoplasm. The protein resides in the nucleus speckle. Involved in pre-mRNA splicing as component of the U4/U6-U5 tri-snRNP complex, one of the building blocks of the spliceosome. Enhances dihydrotestosterone-induced transactivation activity of AR, as well as dexamethasone-induced transactivation activity of NR3C1, but does not affect estrogen-induced transactivation. In Pongo abelii (Sumatran orangutan), this protein is Pre-mRNA-processing factor 6 (PRPF6).